A 420-amino-acid polypeptide reads, in one-letter code: ATP-dependent Clp protease ATP-binding subunit ClpX (420 aa).

Residues 3–57 (KKTPGTNGKQKLFCSFCGKEQDAVKRLVAGPGVYICDECISLCNEIIAEDHEHSH) enclose the ClpX-type ZB domain. Zn(2+) contacts are provided by C16, C19, C38, and C41. 122-129 (PTGSGKTL) is a binding site for ATP.

This sequence belongs to the ClpX chaperone family. Component of the ClpX-ClpP complex. Forms a hexameric ring that, in the presence of ATP, binds to fourteen ClpP subunits assembled into a disk-like structure with a central cavity, resembling the structure of eukaryotic proteasomes.

In terms of biological role, ATP-dependent specificity component of the Clp protease. It directs the protease to specific substrates. Can perform chaperone functions in the absence of ClpP. In Leptospira borgpetersenii serovar Hardjo-bovis (strain L550), this protein is ATP-dependent Clp protease ATP-binding subunit ClpX.